A 170-amino-acid polypeptide reads, in one-letter code: Thialysine N-epsilon-acetyltransferase (170 aa).

The 163-residue stretch at threonine 4–glutamate 166 folds into the N-acetyltransferase domain. Phenylalanine 27–glutamate 28 provides a ligand contact to substrate. Lysine 29 bears the N6-acetyllysine mark. Substrate is bound at residue glutamate 92. Acetyl-CoA-binding positions include isoleucine 94–valine 96, glycine 102–threonine 107, asparagine 133–lysine 135, and tyrosine 140. Tyrosine 140 acts as the Proton donor in catalysis. Residue glutamate 152 coordinates substrate.

It belongs to the acetyltransferase family. In terms of assembly, homodimer.

It is found in the cytoplasm. It carries out the reaction S-(2-aminoethyl)-L-cysteine + acetyl-CoA = S-(2-acetamidoethyl)-L-cysteine + CoA + H(+). The catalysed reaction is an alkane-alpha,omega-diamine + acetyl-CoA = an N-acetylalkane-alpha,omega-diamine + CoA + H(+). In terms of biological role, catalyzes the N-acetylation of the amino acid thialysine (S-(2-aminoethyl)-L-cysteine), a L-lysine analog with the 4-methylene group substituted with a sulfur. May also catalyze acetylation of polyamines, such as norspermidine, spermidine or spermine. However, ability to acetylate polyamines is weak, suggesting that it does not act as a diamine acetyltransferase in vivo. This chain is Thialysine N-epsilon-acetyltransferase, found in Mus musculus (Mouse).